Here is a 466-residue protein sequence, read N- to C-terminus: D-inositol 3-phosphate glycosyltransferase (466 aa).

Over residues 1–12 (MRPMRAGAGAAG) the composition is skewed to low complexity. Positions 1–22 (MRPMRAGAGAAGESCKDDGVRP) are disordered. H43 serves as a coordination point for 1D-myo-inositol 3-phosphate. UDP-N-acetyl-alpha-D-glucosamine-binding positions include 49–50 (QP) and G57. 1D-myo-inositol 3-phosphate-binding positions include 54 to 59 (DAGGMN), K112, Y145, T169, and R189. Positions 263, 268, and 321 each coordinate UDP-N-acetyl-alpha-D-glucosamine. Positions 330, 331, and 333 each coordinate Mg(2+). Positions 343 and 351 each coordinate UDP-N-acetyl-alpha-D-glucosamine. A Mg(2+)-binding site is contributed by T357. A disordered region spans residues 446–466 (VRDPVAARKPRRWTARRGVGA).

It belongs to the glycosyltransferase group 1 family. MshA subfamily. Homodimer.

The enzyme catalyses 1D-myo-inositol 3-phosphate + UDP-N-acetyl-alpha-D-glucosamine = 1D-myo-inositol 2-acetamido-2-deoxy-alpha-D-glucopyranoside 3-phosphate + UDP + H(+). In terms of biological role, catalyzes the transfer of a N-acetyl-glucosamine moiety to 1D-myo-inositol 3-phosphate to produce 1D-myo-inositol 2-acetamido-2-deoxy-glucopyranoside 3-phosphate in the mycothiol biosynthesis pathway. The sequence is that of D-inositol 3-phosphate glycosyltransferase from Mycobacterium marinum (strain ATCC BAA-535 / M).